Consider the following 197-residue polypeptide: MAIVPIRIVGDPVLHTPTQPVPVGPDGSLPDDLPELIANMYETMDAANGVGLAANQIGVPLRLFVYDCAETRGGGTRHRGVVINPVLETSEIPETMPDPDDDEEGCLSVPGESFPTGRAGWARVTGLDADGKEVTLEGNDLFARMLQHETGHLDGFLYIDKLIGRNARAAKRAVKSNGWGVPGLSWTPGQVADPFGH.

Residues Cys106 and His148 each contribute to the Fe cation site. Glu149 is an active-site residue. His152 provides a ligand contact to Fe cation.

This sequence belongs to the polypeptide deformylase family. The cofactor is Fe(2+).

It catalyses the reaction N-terminal N-formyl-L-methionyl-[peptide] + H2O = N-terminal L-methionyl-[peptide] + formate. In terms of biological role, removes the formyl group from the N-terminal Met of newly synthesized proteins. Requires at least a dipeptide for an efficient rate of reaction. N-terminal L-methionine is a prerequisite for activity but the enzyme has broad specificity at other positions. This chain is Peptide deformylase, found in Mycobacteroides abscessus (strain ATCC 19977 / DSM 44196 / CCUG 20993 / CIP 104536 / JCM 13569 / NCTC 13031 / TMC 1543 / L948) (Mycobacterium abscessus).